A 1895-amino-acid chain; its full sequence is Diacylglycerol kinase eta (1895 aa).

Residues 1 to 10 (MAHLKLDTLH) are compositionally biased toward basic and acidic residues. A disordered region spans residues 1-37 (MAHLKLDTLHVQRSPRGSRRSSPSSGRSSACSSGSIS). Over residues 20–37 (RSSPSSGRSSACSSGSIS) the composition is skewed to low complexity. In terms of domain architecture, PH spans 82 to 175 (AIIKEGFLLK…WLGSLKTATA (94 aa)). 2 Phorbol-ester/DAG-type zinc fingers span residues 195–245 (HHHW…IANC) and 267–318 (PHQW…AVAC). In terms of domain architecture, DAGKc spans 349–485 (GNFSPLLVFV…DRWSIMVFEK (137 aa)). 4 disordered regions span residues 781–801 (ANID…ENTP), 1012–1053 (TTLC…MARL), 1113–1137 (QHRG…GANL), and 1172–1191 (PNTI…HGQD). Residues 1113 to 1128 (QHRGGDNDSDYPEHEQ) are compositionally biased toward basic and acidic residues. Residues 1172–1184 (PNTILTTSTSPTK) are compositionally biased toward polar residues. An SAM domain is found at 1832-1895 (WSVNEVVTWL…LQAIKDLSEN (64 aa)).

This sequence belongs to the eukaryotic diacylglycerol kinase family.

The protein resides in the cytoplasm. It catalyses the reaction a 1,2-diacyl-sn-glycerol + ATP = a 1,2-diacyl-sn-glycero-3-phosphate + ADP + H(+). Functionally, phosphorylates diacylglycerol (DAG) to generate phosphatidic acid (PA). The sequence is that of Diacylglycerol kinase eta from Drosophila melanogaster (Fruit fly).